The chain runs to 581 residues: uncharacterized protein (581 aa).

It belongs to the UbiD family.

This is an uncharacterized protein from Chlamydia caviae (strain ATCC VR-813 / DSM 19441 / 03DC25 / GPIC) (Chlamydophila caviae).